A 309-amino-acid polypeptide reads, in one-letter code: Hydroxyacylglutathione hydrolase, mitochondrial (309 aa).

The transit peptide at 1-24 directs the protein to the mitochondrion; the sequence is MVLGRGSLCLRSLSVLGAACARRG. Lys-90 carries the post-translational modification N6-acetyllysine. His-103, His-105, Asp-107, and His-108 together coordinate Zn(2+). At Lys-117 the chain carries N6-acetyllysine. 2 residues coordinate Zn(2+): His-159 and Asp-183. Substrate-binding positions include 192-194 and 222-224; these read KFY and HEY. His-222 serves as a coordination point for Zn(2+). An N6-acetyllysine; alternate modification is found at Lys-230. Lys-230 carries the post-translational modification N6-succinyllysine; alternate. A substrate-binding site is contributed by 298–301; the sequence is RREK.

It belongs to the metallo-beta-lactamase superfamily. Glyoxalase II family. As to quaternary structure, monomer. Zn(2+) is required as a cofactor. Strongly expressed in testis, skeletal muscle and heart. Weakly expressed in placenta, pancreas, spleen and peripheral blood leukocytes.

The protein resides in the mitochondrion matrix. The protein localises to the cytoplasm. The catalysed reaction is an S-(2-hydroxyacyl)glutathione + H2O = a 2-hydroxy carboxylate + glutathione + H(+). The enzyme catalyses (R)-S-lactoylglutathione + H2O = (R)-lactate + glutathione + H(+). The protein operates within secondary metabolite metabolism; methylglyoxal degradation; (R)-lactate from methylglyoxal: step 2/2. Thiolesterase that catalyzes the hydrolysis of S-D-lactoyl-glutathione to form glutathione and D-lactic acid. The sequence is that of Hydroxyacylglutathione hydrolase, mitochondrial (Hagh) from Rattus norvegicus (Rat).